We begin with the raw amino-acid sequence, 444 residues long: MEFKYLVFIVLCQYLDNTFFSETEAITTEQQSLSTLITPSLYVTTDSQNTAGNALSQTTRFKNISSGQQASPAQITPEQATPAVYVSSSPLTYNITRQAESAVNNSLPQTSPSGFTLTNQPSPSTYNSTGQPPKHLVYTSTQQPPSPAPTSSGKPEVESTHNQPTKSTPTIYLQRDTPPPPPPPLTSEPPSGKGTAHKNNHNAIAAILIGTIIISMLVAILMIILWKYLRKPVLNDQNWAGRSPFADGETPEMCMDNIRESEASTKRASVVSLMTWKPSKSTLLADDLEVKLFESSEHINDTSNLKTDNVEVQINGLSEDSADGSTVGTAVSSDDADLALPPPLLDLDENLPNKPTVTVVSPLPNDSINPQPSPDGLNQVCEEQHSKIQEPFPPPPDSFNVPLSAGDFINNQESAHEAQCQEFSTPDLHPDLTDSLPPPPTELL.

Residues 1 to 23 form the signal peptide; it reads MEFKYLVFIVLCQYLDNTFFSET. Over 24–203 the chain is Extracellular; the sequence is EAITTEQQSL…GTAHKNNHNA (180 aa). Residues Asn-63, Asn-94, Asn-104, and Asn-127 are each glycosylated (N-linked (GlcNAc...) asparagine). Composition is skewed to polar residues over residues 104–131 and 160–171; these read NNSLPQTSPSGFTLTNQPSPSTYNSTGQ and THNQPTKSTPTI. Residues 104–197 form a disordered region; the sequence is NNSLPQTSPS…EPPSGKGTAH (94 aa). A compositionally biased stretch (pro residues) spans 177–187; that stretch reads TPPPPPPPLTS. The chain crosses the membrane as a helical span at residues 204–224; it reads IAAILIGTIIISMLVAILMII. Residues 225 to 444 lie on the Cytoplasmic side of the membrane; the sequence is LWKYLRKPVL…SLPPPPTELL (220 aa). A Phosphothreonine modification is found at Thr-250. Residues Ser-269, Ser-272, Ser-279, and Ser-295 each carry the phosphoserine modification. 2 stretches are compositionally biased toward polar residues: residues 318–332 and 361–370; these read SEDSADGSTVGTAVS and SPLPNDSINP. Disordered stretches follow at residues 318 to 337 and 361 to 444; these read SEDSADGSTVGTAVSSDDAD and SPLP…TELL.

In terms of tissue distribution, expressed in myeloid and lymphoid progenitors and increased in mature hematopoietic populations with the highest levels in granulocytes.

It localises to the membrane. In terms of biological role, required for granulocyte differentiation and functionality of hematopoietic progenitor cells through the control of cell cycle progression and survival of hematopoietic progenitor cells. This chain is Protein EVI2B, found in Mus musculus (Mouse).